The chain runs to 605 residues: Isocitrate dehydrogenase kinase/phosphatase (605 aa).

ATP contacts are provided by residues 327–333 and Lys348; that span reads APGIKGL. Asp383 is a catalytic residue.

It belongs to the AceK family.

It localises to the cytoplasm. It catalyses the reaction L-seryl-[isocitrate dehydrogenase] + ATP = O-phospho-L-seryl-[isocitrate dehydrogenase] + ADP + H(+). In terms of biological role, bifunctional enzyme which can phosphorylate or dephosphorylate isocitrate dehydrogenase (IDH) on a specific serine residue. This is a regulatory mechanism which enables bacteria to bypass the Krebs cycle via the glyoxylate shunt in response to the source of carbon. When bacteria are grown on glucose, IDH is fully active and unphosphorylated, but when grown on acetate or ethanol, the activity of IDH declines drastically concomitant with its phosphorylation. In Burkholderia multivorans (strain ATCC 17616 / 249), this protein is Isocitrate dehydrogenase kinase/phosphatase.